A 425-amino-acid chain; its full sequence is Serine hydroxymethyltransferase 2 (425 aa).

(6S)-5,6,7,8-tetrahydrofolate is bound by residues Leu121 and 125 to 127 (GHL). Lys230 carries the post-translational modification N6-(pyridoxal phosphate)lysine.

Belongs to the SHMT family. Homodimer. It depends on pyridoxal 5'-phosphate as a cofactor.

The protein resides in the cytoplasm. The catalysed reaction is (6R)-5,10-methylene-5,6,7,8-tetrahydrofolate + glycine + H2O = (6S)-5,6,7,8-tetrahydrofolate + L-serine. The protein operates within one-carbon metabolism; tetrahydrofolate interconversion. Its pathway is amino-acid biosynthesis; glycine biosynthesis; glycine from L-serine: step 1/1. Its function is as follows. Catalyzes the reversible interconversion of serine and glycine with tetrahydrofolate (THF) serving as the one-carbon carrier. This reaction serves as the major source of one-carbon groups required for the biosynthesis of purines, thymidylate, methionine, and other important biomolecules. Also exhibits THF-independent aldolase activity toward beta-hydroxyamino acids, producing glycine and aldehydes, via a retro-aldol mechanism. This Mycobacterium tuberculosis (strain CDC 1551 / Oshkosh) protein is Serine hydroxymethyltransferase 2.